Here is a 115-residue protein sequence, read N- to C-terminus: MEVAAKLKYARISAQKARLVADQVRGLGAEQAVNLLRFSNKKAAALMKKVLDSAIANAEHNEGADIDELKVSTVMVDEGPSARRFHARARGRANQILKRTCHITVKVSDSQVEND.

It belongs to the universal ribosomal protein uL22 family. Part of the 50S ribosomal subunit.

Its function is as follows. This protein binds specifically to 23S rRNA; its binding is stimulated by other ribosomal proteins, e.g. L4, L17, and L20. It is important during the early stages of 50S assembly. It makes multiple contacts with different domains of the 23S rRNA in the assembled 50S subunit and ribosome. In terms of biological role, the globular domain of the protein is located near the polypeptide exit tunnel on the outside of the subunit, while an extended beta-hairpin is found that lines the wall of the exit tunnel in the center of the 70S ribosome. The protein is Large ribosomal subunit protein uL22 of Coxiella burnetii (strain CbuG_Q212) (Coxiella burnetii (strain Q212)).